The following is a 378-amino-acid chain: 23S rRNA (uracil(747)-C(5))-methyltransferase RlmC (378 aa).

[4Fe-4S] cluster is bound by residues Cys3, Cys11, Cys14, and Cys87. Positions 212, 241, 262, and 309 each coordinate S-adenosyl-L-methionine. The active-site Nucleophile is the Cys336.

The protein belongs to the class I-like SAM-binding methyltransferase superfamily. RNA M5U methyltransferase family. RlmC subfamily.

It carries out the reaction uridine(747) in 23S rRNA + S-adenosyl-L-methionine = 5-methyluridine(747) in 23S rRNA + S-adenosyl-L-homocysteine + H(+). Its function is as follows. Catalyzes the formation of 5-methyl-uridine at position 747 (m5U747) in 23S rRNA. The protein is 23S rRNA (uracil(747)-C(5))-methyltransferase RlmC of Shewanella halifaxensis (strain HAW-EB4).